Reading from the N-terminus, the 117-residue chain is UPF0102 protein Rsph17025_0472 (117 aa).

It belongs to the UPF0102 family.

The chain is UPF0102 protein Rsph17025_0472 from Cereibacter sphaeroides (strain ATCC 17025 / ATH 2.4.3) (Rhodobacter sphaeroides).